Here is a 350-residue protein sequence, read N- to C-terminus: Secreted effector protein PipB2 (350 aa).

Pentapeptide repeat domains lie at 162–201 (ANLT…NLSG), 202–241 (TSLG…SLLG), 247–286 (CNCS…IMEG), and 287–326 (AVLT…TLTD).

As to quaternary structure, interacts with the host kinesin light chain (KLC), a subunit of the kinesin-1 motor complex.

The protein localises to the secreted. The protein resides in the host membrane. Effector proteins function to alter host cell physiology and promote bacterial survival in host tissues. Involved in the reorganization of late endosome/lysosome (LE/Lys) compartments in mammalian cells. Necessary and sufficient to link kinesin-1 onto the Salmonella-containing vacuole (SCV) membrane. Required for centrifugal extension of lysosomal glycoprotein-rich membrane tubules, known as Salmonella-induced filaments (Sifs), away from the SCV and toward the cell periphery. Required for virulence, but not for intracellular survival and replication in phagocytic cells. The protein is Secreted effector protein PipB2 (pipB2) of Salmonella typhimurium (strain LT2 / SGSC1412 / ATCC 700720).